We begin with the raw amino-acid sequence, 111 residues long: Large ribosomal subunit protein eL31 (111 aa).

The protein belongs to the eukaryotic ribosomal protein eL31 family.

This is Large ribosomal subunit protein eL31 (rpl31) from Dictyostelium discoideum (Social amoeba).